The chain runs to 336 residues: Antigen-presenting glycoprotein CD1d1 (336 aa).

An N-terminal signal peptide occupies residues 1–21; sequence MRYLPWLLLWAFLQVWGQSEA. Residues 22-305 are Extracellular-facing; that stretch reads QQKNYTFRCL…YWDARQAPVG (284 aa). N-linked (GlcNAc...) asparagine glycans are attached at residues asparagine 25, asparagine 38, and asparagine 60. Aspartate 98 contacts a D-galactosylceramide. Disulfide bonds link cysteine 122/cysteine 186 and cysteine 226/cysteine 281. The N-linked (GlcNAc...) asparagine glycan is linked to asparagine 128. 171 to 174 provides a ligand contact to a D-galactosylceramide; sequence DQGT. An N-linked (GlcNAc...) asparagine glycan is attached at asparagine 183. Positions 207 to 297 constitute an Ig-like domain; that stretch reads PVAWLSSVPS…LGGQDIILYW (91 aa). A helical membrane pass occupies residues 306-326; the sequence is LIVFIVLIMLVVVGAVVYYIW. Over 327-336 the chain is Cytoplasmic; the sequence is RRRSAYQDIR. The short motif at 332 to 335 is the Internalization signal element; sequence YQDI.

As to quaternary structure, heterodimer with B2M (beta-2-microglobulin). Interacts with MHC II and CD74. Post-translationally, N-glycosylated. In terms of tissue distribution, expressed on cortical thymocytes, on certain T-cell leukemias, and in various other tissues.

The protein resides in the cell membrane. Its subcellular location is the endosome membrane. It is found in the lysosome membrane. Its function is as follows. Antigen-presenting protein that binds self and non-self glycolipids and presents them to T-cell receptors on natural killer T-cells. In Mus musculus (Mouse), this protein is Antigen-presenting glycoprotein CD1d1 (Cd1d1).